We begin with the raw amino-acid sequence, 106 residues long: UPF0145 protein BF0270 (106 aa).

This sequence belongs to the UPF0145 family.

This chain is UPF0145 protein BF0270, found in Bacteroides fragilis (strain YCH46).